The chain runs to 174 residues: Adenine phosphoribosyltransferase (174 aa).

It belongs to the purine/pyrimidine phosphoribosyltransferase family. Homodimer.

It is found in the cytoplasm. The enzyme catalyses AMP + diphosphate = 5-phospho-alpha-D-ribose 1-diphosphate + adenine. It participates in purine metabolism; AMP biosynthesis via salvage pathway; AMP from adenine: step 1/1. In terms of biological role, catalyzes a salvage reaction resulting in the formation of AMP, that is energically less costly than de novo synthesis. The chain is Adenine phosphoribosyltransferase from Photobacterium profundum (strain SS9).